The sequence spans 343 residues: S-adenosylmethionine:tRNA ribosyltransferase-isomerase (343 aa).

Belongs to the QueA family. Monomer.

It is found in the cytoplasm. The catalysed reaction is 7-aminomethyl-7-carbaguanosine(34) in tRNA + S-adenosyl-L-methionine = epoxyqueuosine(34) in tRNA + adenine + L-methionine + 2 H(+). Its pathway is tRNA modification; tRNA-queuosine biosynthesis. In terms of biological role, transfers and isomerizes the ribose moiety from AdoMet to the 7-aminomethyl group of 7-deazaguanine (preQ1-tRNA) to give epoxyqueuosine (oQ-tRNA). The chain is S-adenosylmethionine:tRNA ribosyltransferase-isomerase from Natranaerobius thermophilus (strain ATCC BAA-1301 / DSM 18059 / JW/NM-WN-LF).